We begin with the raw amino-acid sequence, 461 residues long: Glycine--tRNA ligase (461 aa).

Substrate contacts are provided by Arg-100 and Glu-163. Residues 195–197, 205–210, 282–283, and 326–329 contribute to the ATP site; these read RNE, FRTREF, EL, and GLGR. 210 to 214 provides a ligand contact to substrate; sequence FEQME. Residue 322 to 326 participates in substrate binding; that stretch reads EPAAG.

It belongs to the class-II aminoacyl-tRNA synthetase family. As to quaternary structure, homodimer.

Its subcellular location is the cytoplasm. It catalyses the reaction tRNA(Gly) + glycine + ATP = glycyl-tRNA(Gly) + AMP + diphosphate. Functionally, catalyzes the attachment of glycine to tRNA(Gly). This Corynebacterium glutamicum (strain ATCC 13032 / DSM 20300 / JCM 1318 / BCRC 11384 / CCUG 27702 / LMG 3730 / NBRC 12168 / NCIMB 10025 / NRRL B-2784 / 534) protein is Glycine--tRNA ligase.